The sequence spans 339 residues: Protein FAM50A (339 aa).

The disordered stretch occupies residues 1–31 (MAQYKGAASEAGRAMHLMKKREKQREQMEQM). At Ala-2 the chain carries N-acetylalanine. A Glycyl lysine isopeptide (Lys-Gly) (interchain with G-Cter in SUMO2) cross-link involves residue Lys-100. The disordered stretch occupies residues 121–177 (SFTLEEEEEGGEEEEEAAMYEEEMEREEITTKKRKLGKNPDVDTSFLPDRDREEEEN). Residues 124–146 (LEEEEEGGEEEEEAAMYEEEMER) show a composition bias toward acidic residues. Positions 152–155 (KKRK) match the Nuclear localization signal motif. Residues 168 to 177 (PDRDREEEEN) are compositionally biased toward basic and acidic residues.

This sequence belongs to the FAM50 family. As to quaternary structure, interacts with EFTUD2, a component of the spliceosome U5 complex. Interacts with DDX41, a component of the spliceosome C complex. As to expression, widely expressed in fetal and adult tissues. Mostly abundant in fetal brain, liver and kidney; in the adult, high levels were also observed in heart, skeletal muscle, spleen, thymus, prostate and small intestine. Expressed in fetal cerebellum and hypothalamus. Low expression is observed in fetal temporal lobe.

It is found in the nucleus. Its function is as follows. Probably involved in the regulation of pre-mRNA splicing. The polypeptide is Protein FAM50A (FAM50A) (Homo sapiens (Human)).